The chain runs to 95 residues: Co-chaperonin GroES (95 aa).

This sequence belongs to the GroES chaperonin family. In terms of assembly, heptamer of 7 subunits arranged in a ring. Interacts with the chaperonin GroEL.

Its subcellular location is the cytoplasm. Functionally, together with the chaperonin GroEL, plays an essential role in assisting protein folding. The GroEL-GroES system forms a nano-cage that allows encapsulation of the non-native substrate proteins and provides a physical environment optimized to promote and accelerate protein folding. GroES binds to the apical surface of the GroEL ring, thereby capping the opening of the GroEL channel. The sequence is that of Co-chaperonin GroES from Aliivibrio salmonicida (strain LFI1238) (Vibrio salmonicida (strain LFI1238)).